Consider the following 233-residue polypeptide: Probable GTP-binding protein EngB (233 aa).

Residues glycine 21 to aspartate 228 form the EngB-type G domain. GTP is bound by residues glycine 29–serine 36 and glycine 56–alanine 60. Residues serine 36 and threonine 58 each contribute to the Mg(2+) site. A disordered region spans residues proline 68–threonine 87. A compositionally biased stretch (basic and acidic residues) spans proline 72 to glycine 85. Residues aspartate 107–glycine 110, threonine 174–aspartate 177, and phenylalanine 207–alanine 209 each bind GTP.

Belongs to the TRAFAC class TrmE-Era-EngA-EngB-Septin-like GTPase superfamily. EngB GTPase family. Mg(2+) serves as cofactor.

In terms of biological role, necessary for normal cell division and for the maintenance of normal septation. In Symbiobacterium thermophilum (strain DSM 24528 / JCM 14929 / IAM 14863 / T), this protein is Probable GTP-binding protein EngB.